The following is a 483-amino-acid chain: MKHYVAVDIGASSGRLILGKLVNEKLQLEEIHRFKNGFTYRDGHERWEIDQLMQEIFIGLEKVKQLGISECVLGIDTWGVDYVLIGASGEKLADPISYRDKRTLNAVQNLTSEYPREYIYKKTGIQFMELNTLYQLYVEERNLLERAEKILLIPDYIGYVLTGVKVAETTNSSTTQMLNLREQLFDKDLLSHLNIDVEKFAPLTDAGTYLGKVKAEWLEEYDIPNCDVVTVATHDTASAVVGTPAEGENWAFLSSGTWSLIGMELIAPINNEAAFKENYTNEWGAYGTYRFLKNIMGLWIVQEIARMDDYKHSFAEMAEEASNYPYFKQIINVNDARFNNPENMVDEIKLYCQETGQTVPETIGELTNCVYGSLALYYALELEKMTEITGKKIEKLYIVGGGSNVAMLNQLTAKLAGIEVFAGPSEATAIGNLVVQMINQGEIESMRAGRKIIRNSFEIGEFSCGDVRFEEIKERFTKVLEFN.

11–15 contributes to the ATP binding site; that stretch reads ASSGR. Residues glycine 79 and 234-236 each bind substrate; that span reads HDT. The active-site Proton acceptor is aspartate 235. Threonine 257 contributes to the ATP binding site. A substrate-binding site is contributed by asparagine 294. Glutamine 302 is an ATP binding site. A disulfide bond links cysteine 352 and cysteine 369. Glycine 401 lines the ATP pocket.

The protein belongs to the rhamnulokinase family. Requires Mg(2+) as cofactor.

It carries out the reaction L-rhamnulose + ATP = L-rhamnulose 1-phosphate + ADP + H(+). The protein operates within carbohydrate degradation; L-rhamnose degradation; glycerone phosphate from L-rhamnose: step 2/3. In terms of biological role, involved in the catabolism of L-rhamnose (6-deoxy-L-mannose). Catalyzes the transfer of the gamma-phosphate group from ATP to the 1-hydroxyl group of L-rhamnulose to yield L-rhamnulose 1-phosphate. This is Rhamnulokinase from Listeria innocua serovar 6a (strain ATCC BAA-680 / CLIP 11262).